We begin with the raw amino-acid sequence, 418 residues long: Queuine tRNA-ribosyltransferase accessory subunit 2 (418 aa).

Zn(2+)-binding residues include C325, C327, C330, and H356.

Belongs to the queuine tRNA-ribosyltransferase family. QTRT2 subfamily. Heterodimer of a catalytic subunit and an accessory subunit. The cofactor is Zn(2+).

The protein localises to the cytoplasm. Non-catalytic subunit of the queuine tRNA-ribosyltransferase (TGT) that catalyzes the base-exchange of a guanine (G) residue with queuine (Q) at position 34 (anticodon wobble position) in tRNAs with GU(N) anticodons (tRNA-Asp, -Asn, -His and -Tyr), resulting in the hypermodified nucleoside queuosine (7-(((4,5-cis-dihydroxy-2-cyclopenten-1-yl)amino)methyl)-7-deazaguanosine). The sequence is that of Queuine tRNA-ribosyltransferase accessory subunit 2 from Drosophila yakuba (Fruit fly).